Consider the following 274-residue polypeptide: Proto-oncogene FRAT1 (274 aa).

Disordered stretches follow at residues 1-24 (MPCRREEEEEAGDEAEGEEDDDSF), 55-107 (AHDR…PGAV), 132-194 (GASA…DDPH), and 232-274 (GPLS…VPGS). Over residues 7–23 (EEEEAGDEAEGEEDDDS) the composition is skewed to acidic residues. The segment at 191 to 214 (DDPHRLLQQLVLSGNLIKEAVRRL) is involved in GSK-3 binding. Residues serine 243 and serine 246 each carry the phosphoserine modification.

This sequence belongs to the GSK-3-binding protein family. As to quaternary structure, binds DVL1. Binds GSK-3 and prevent GSK-3-dependent phosphorylation. Post-translationally, phosphorylated. As to expression, highly expressed in testis. Lower level of expression in spleen, thymus and brain.

It localises to the cytoplasm. Functionally, positively regulates the Wnt signaling pathway by stabilizing beta-catenin through the association with GSK-3. May play a role in tumor progression and collaborate with PIM1 and MYC in lymphomagenesis. The polypeptide is Proto-oncogene FRAT1 (Frat1) (Mus musculus (Mouse)).